A 176-amino-acid polypeptide reads, in one-letter code: Ribosome maturation factor RimP (176 aa).

This sequence belongs to the RimP family.

The protein localises to the cytoplasm. Required for maturation of 30S ribosomal subunits. In Mycolicibacterium vanbaalenii (strain DSM 7251 / JCM 13017 / BCRC 16820 / KCTC 9966 / NRRL B-24157 / PYR-1) (Mycobacterium vanbaalenii), this protein is Ribosome maturation factor RimP.